Consider the following 1466-residue polypeptide: Retrovirus-related Pol polyprotein from transposon RE1 (1466 aa).

The interval 227 to 270 is disordered; it reads SHRNTTTTNNNNNGNRNNRYDNRNNNNNSKPWQQSSTNFHPNNN. Residues 229–254 show a composition bias toward low complexity; the sequence is RNTTTTNNNNNGNRNNRYDNRNNNNN. Positions 255–270 are enriched in polar residues; that stretch reads SKPWQQSSTNFHPNNN. The CCHC-type zinc-finger motif lies at 278–294; that stretch reads KCQICGVQGHSAKRCSQ. Asp334 serves as the catalytic For protease activity. The Integrase catalytic domain maps to 519 to 682; that stretch reads NSTRPLEYIY…SPFQKLFGTS (164 aa). 2 residues coordinate Mg(2+): Asp530 and Asp592. The segment at 772–927 is disordered; sequence WSPHTTLPTR…NNNQAPLNTH (156 aa). Composition is skewed to low complexity over residues 796–827 and 836–898; these read AATP…SFPS and QNGP…SSTS. Residues 899 to 912 are compositionally biased toward pro residues; sequence PTPPSILIHPPPPL. The segment covering 915–927 has biased composition (polar residues); it reads IVNNNNQAPLNTH. The region spanning 982–1225 is the Reverse transcriptase Ty1/copia-type domain; it reads NHTWDLVPPP…ITAKPVTTPM (244 aa).

It catalyses the reaction DNA(n) + a 2'-deoxyribonucleoside 5'-triphosphate = DNA(n+1) + diphosphate. This Arabidopsis thaliana (Mouse-ear cress) protein is Retrovirus-related Pol polyprotein from transposon RE1 (RE1).